The primary structure comprises 1063 residues: Cation efflux system protein CzcA (1063 aa).

10 helical membrane-spanning segments follow: residues 14–29 (WLVLLAVFGMAGLGIF), 350–370 (GAVLVIVILFLFLGNIRAALI), 452–472 (LIFGQLIIMIVYLPIFALTGV), 487–507 (ALLGAMILSVTFVPAAVALFI), 534–554 (LANTAVVLTFAAVSIVLCVAI), 883–903 (VVVPVALLLVFVLLFAMFNNI), 906–926 (GLLVFTGIPFALTGGILALWI), 937–957 (VGFIALCGVAVLNGLVMLSFI), 982–1004 (VLMTALVASLGFVPMAIATGTGA), and 1013–1033 (VVIGGILSSTALTLLVLPVLY). The disordered stretch occupies residues 1040–1063 (DEDAEDTREPVTQTHQPDQGRQPA). Over residues 1049–1063 (PVTQTHQPDQGRQPA) the composition is skewed to polar residues.

This sequence belongs to the resistance-nodulation-cell division (RND) (TC 2.A.6) family.

The protein resides in the cell membrane. Its function is as follows. Has a low cation transport activity for cobalt, it is essential for the expression of cobalt, zinc, and cadmium resistance. CzcA and CzcB together would act in zinc efflux nearly as effectively as the complete CZC efflux system (CzcABC). This is Cation efflux system protein CzcA (czcA) from Alcaligenes sp. (strain CT14).